A 461-amino-acid chain; its full sequence is D-phenylhydantoinase (461 aa).

Residues His-59, His-61, and Lys-151 each coordinate a divalent metal cation. Lys-151 bears the N6-carboxylysine mark. Tyr-156 provides a ligand contact to substrate. The a divalent metal cation site is built by His-182 and His-239. Ser-286 contacts substrate. Asp-313 contributes to the a divalent metal cation binding site. Asn-335 lines the substrate pocket.

This sequence belongs to the metallo-dependent hydrolases superfamily. Hydantoinase/dihydropyrimidinase family. In terms of assembly, homotetramer. A divalent metal cation is required as a cofactor. Carboxylation allows a single lysine to coordinate two divalent metal cations.

The enzyme catalyses D-5-phenylhydantoin + H2O = N-carbamoyl-D-phenylglycine + H(+). Functionally, catalyzes the stereospecific hydrolysis of the cyclic amide bond of D-hydantoin derivatives with an aromatic side chains at the 5'-position. Has no activity on dihydropyrimidines. The physiological function is unknown. This is D-phenylhydantoinase from Escherichia coli O9:H4 (strain HS).